The chain runs to 282 residues: Bifunctional protein FolD (282 aa).

NADP(+)-binding positions include 166 to 168 (GRS) and serine 191.

The protein belongs to the tetrahydrofolate dehydrogenase/cyclohydrolase family. Homodimer.

It catalyses the reaction (6R)-5,10-methylene-5,6,7,8-tetrahydrofolate + NADP(+) = (6R)-5,10-methenyltetrahydrofolate + NADPH. The enzyme catalyses (6R)-5,10-methenyltetrahydrofolate + H2O = (6R)-10-formyltetrahydrofolate + H(+). Its pathway is one-carbon metabolism; tetrahydrofolate interconversion. Functionally, catalyzes the oxidation of 5,10-methylenetetrahydrofolate to 5,10-methenyltetrahydrofolate and then the hydrolysis of 5,10-methenyltetrahydrofolate to 10-formyltetrahydrofolate. This is Bifunctional protein FolD from Acidovorax sp. (strain JS42).